A 53-amino-acid polypeptide reads, in one-letter code: SLRLALICPGLLPIRNICVATSRSRGVFRKYKLSRIMLRDMGLQGLLPGFKKR.

This sequence belongs to the universal ribosomal protein uS14 family.

It is found in the mitochondrion. The sequence is that of Small ribosomal subunit protein uS14m (RPS14) from Bigelowiella natans (Pedinomonas minutissima).